A 255-amino-acid polypeptide reads, in one-letter code: tRNA (guanine-N(1)-)-methyltransferase (255 aa).

Residues glycine 121 and 141-146 each bind S-adenosyl-L-methionine; that span reads IGDYVL. The disordered stretch occupies residues 236 to 255; that stretch reads PVKAPNRAGRQKTPKNKTDG. Positions 244–255 are enriched in basic residues; it reads GRQKTPKNKTDG.

The protein belongs to the RNA methyltransferase TrmD family. Homodimer.

Its subcellular location is the cytoplasm. It carries out the reaction guanosine(37) in tRNA + S-adenosyl-L-methionine = N(1)-methylguanosine(37) in tRNA + S-adenosyl-L-homocysteine + H(+). Specifically methylates guanosine-37 in various tRNAs. The chain is tRNA (guanine-N(1)-)-methyltransferase from Bradyrhizobium diazoefficiens (strain JCM 10833 / BCRC 13528 / IAM 13628 / NBRC 14792 / USDA 110).